The following is a 353-amino-acid chain: Inositol-tetrakisphosphate 1-kinase 3 (353 aa).

Positions 1-25 are disordered; sequence MKLTDNEEITMNGTREMETTEQETS. 1D-myo-inositol 1,3,4-trisphosphate contacts are provided by Lys50 and Lys92. ATP is bound by residues Arg127 and Lys177. Positions 138–350 constitute an ATP-grasp domain; the sequence is NLSDSNGRVG…QSQCKKRALA (213 aa). Residues His188 and Lys220 each coordinate 1D-myo-inositol 1,3,4-trisphosphate. ATP contacts are provided by residues 209–220 and Ser235; that span reads QEFVNHGGVLFK. Mg(2+)-binding residues include Asp300, Asp315, and Asn317. A 1D-myo-inositol 1,3,4-trisphosphate-binding site is contributed by Asn317.

The protein belongs to the ITPK1 family. As to quaternary structure, monomer. It depends on Mg(2+) as a cofactor. Highly expressed in leaves and flowers, and at lower levels in roots, stems, cauline leaves and siliques.

It catalyses the reaction 1D-myo-inositol 3,4,5,6-tetrakisphosphate + ATP = 1D-myo-inositol 1,3,4,5,6-pentakisphosphate + ADP + H(+). The enzyme catalyses 1D-myo-inositol 1,3,4-trisphosphate + ATP = 1D-myo-inositol 1,3,4,5-tetrakisphosphate + ADP + H(+). It carries out the reaction 1D-myo-inositol 1,3,4-trisphosphate + ATP = 1D-myo-inositol 1,3,4,6-tetrakisphosphate + ADP + H(+). Its function is as follows. Kinase that can phosphorylate various inositol polyphosphate such as Ins(3,4,5,6)P4 or Ins(1,3,4)P3. Phosphorylates Ins(3,4,5,6)P4 to form InsP5. This reaction is thought to have regulatory importance, since Ins(3,4,5,6)P4 is an inhibitor of plasma membrane Ca(2+)-activated Cl(-) channels, while Ins(1,3,4,5,6)P5 is not. Also phosphorylates Ins(1,3,4)P3 or a racemic mixture of Ins(1,4,6)P3 and Ins(3,4,6)P3 to form InsP4. Ins(1,3,4,6)P4 is an essential molecule in the hexakisphosphate (InsP6) pathway. The protein is Inositol-tetrakisphosphate 1-kinase 3 (ITPK3) of Arabidopsis thaliana (Mouse-ear cress).